A 469-amino-acid chain; its full sequence is 3-isopropylmalate dehydratase large subunit (469 aa).

3 residues coordinate [4Fe-4S] cluster: Cys-350, Cys-410, and Cys-413.

It belongs to the aconitase/IPM isomerase family. LeuC type 1 subfamily. Heterodimer of LeuC and LeuD. Requires [4Fe-4S] cluster as cofactor.

It catalyses the reaction (2R,3S)-3-isopropylmalate = (2S)-2-isopropylmalate. The protein operates within amino-acid biosynthesis; L-leucine biosynthesis; L-leucine from 3-methyl-2-oxobutanoate: step 2/4. Functionally, catalyzes the isomerization between 2-isopropylmalate and 3-isopropylmalate, via the formation of 2-isopropylmaleate. The chain is 3-isopropylmalate dehydratase large subunit from Chelativorans sp. (strain BNC1).